Reading from the N-terminus, the 461-residue chain is Argininosuccinate lyase (461 aa).

Belongs to the lyase 1 family. Argininosuccinate lyase subfamily.

Its subcellular location is the cytoplasm. It carries out the reaction 2-(N(omega)-L-arginino)succinate = fumarate + L-arginine. The protein operates within amino-acid biosynthesis; L-arginine biosynthesis; L-arginine from L-ornithine and carbamoyl phosphate: step 3/3. This Aeromonas salmonicida (strain A449) protein is Argininosuccinate lyase.